A 278-amino-acid chain; its full sequence is Multidrug-efflux transporter 1 regulator (278 aa).

In terms of domain architecture, HTH merR-type spans 5 to 75 (YYSIGEVSKL…LEEMKKAQDL (71 aa)). Residues 8 to 27 (IGEVSKLANVSIKALRYYDK) constitute a DNA-binding region (H-T-H motif).

As to quaternary structure, binds DNA as a homodimer.

Functionally, activates transcription of the bmr gene in response to structurally dissimilar drugs. Binds rhodamine as an inducer. This is Multidrug-efflux transporter 1 regulator (bmrR) from Bacillus subtilis (strain 168).